A 453-amino-acid polypeptide reads, in one-letter code: Putative sodium-coupled neutral amino acid transporter 11 (453 aa).

A compositionally biased stretch (polar residues) spans 1–10 (MSYQQPQLSG). The segment at 1–34 (MSYQQPQLSGPLQRETDSSDRESLISGHEHGGKS) is disordered. A compositionally biased stretch (basic and acidic residues) spans 14 to 32 (RETDSSDRESLISGHEHGG). 11 consecutive transmembrane segments (helical) span residues 39-59 (AVFNVVNSVIGSGIIGLPYSM), 66-86 (LGILLLFLVSYITDFSLVLLI), 106-126 (GFPGYLLLSTLQFMYPFIAMI), 150-170 (GWFISRHFIIVVSTVTCTLPL), 179-199 (LGKISFISTILTTVILGIVMT), 222-242 (AIQAIGVMSFAFICHHNCFLV), 262-282 (ILVSVFICVLFATCGYFTFTG), 299-319 (VTFGRFCYGITVILTYPIECF), 337-357 (VFHTVLAVLIVTAATLVSLMI), 359-379 (CLGIVLELNGVLCAAPLIFII), and 398-418 (IMACVMFPVGAVVMVVGFVMA). 2 N-linked (GlcNAc...) asparagine glycosylation sites follow: Asn438 and Asn443.

The protein belongs to the amino acid/polyamine transporter 2 family.

The protein resides in the membrane. Functionally, putative sodium-dependent amino acid/proton antiporter. The protein is Putative sodium-coupled neutral amino acid transporter 11 (Slc38a11) of Mus musculus (Mouse).